The chain runs to 545 residues: Chaperonin GroEL (545 aa).

ATP contacts are provided by residues 30-33, K51, 87-91, G415, and D495; these read TLGP and DGTTT.

This sequence belongs to the chaperonin (HSP60) family. In terms of assembly, forms a cylinder of 14 subunits composed of two heptameric rings stacked back-to-back. Interacts with the co-chaperonin GroES.

The protein resides in the cytoplasm. The catalysed reaction is ATP + H2O + a folded polypeptide = ADP + phosphate + an unfolded polypeptide.. In terms of biological role, together with its co-chaperonin GroES, plays an essential role in assisting protein folding. The GroEL-GroES system forms a nano-cage that allows encapsulation of the non-native substrate proteins and provides a physical environment optimized to promote and accelerate protein folding. This Shewanella putrefaciens (strain CN-32 / ATCC BAA-453) protein is Chaperonin GroEL.